The sequence spans 129 residues: MADSSNNEKAKPLADSKLTLTILDLIQQSNNLGQLKKGANECTKAVSRSTAEFVVLAADAEPLEILLHIPLLCEDKNIPYVFVSSKSELGRACDVSRPVVACAVTVDDKSQLKSQITNVKDSLDRLWIV.

This sequence belongs to the eukaryotic ribosomal protein eL8 family.

The protein resides in the nucleus. It localises to the nucleolus. Binds to the 5'-stem-loop of U4 snRNA and may play a role in the late stage of spliceosome assembly. The protein undergoes a conformational change upon RNA-binding. In Dictyostelium discoideum (Social amoeba), this protein is NHP2-like protein 1 homolog.